The sequence spans 341 residues: Probable GDP-mannose transporter 2 (341 aa).

Over 1-11 (MSKHKHEWTES) the chain is Cytoplasmic. The chain crosses the membrane as a helical span at residues 12-32 (VANSGPASILSYCASSILMTV). Over 33–46 (TNKFVVNLDNFNMN) the chain is Lumenal. The helical transmembrane segment at 47–67 (FVMLFVQSLVCTVTLCILRIV) threads the bilayer. The Cytoplasmic portion of the chain corresponds to 68 to 85 (GVANFRSLNRTDVKNWFP). The chain crosses the membrane as a helical span at residues 86 to 106 (ISLLLVLMIYTSLKSLQYLAV). A topological domain (lumenal) is located at residue Pro-107. The helical transmembrane segment at 108–128 (IYTIFKNLTIILIAYGEVLFF) threads the bilayer. The Cytoplasmic portion of the chain corresponds to 129 to 139 (GGKVTSMELTS). The helical transmembrane segment at 140 to 160 (FIMMVLSSVVATWGDQQAIAI) threads the bilayer. Topologically, residues 161 to 176 (KASSLEDLDQELVEST) are lumenal. A helical transmembrane segment spans residues 177–197 (IFVLNPGYLWMFTNCISSALF). The Cytoplasmic portion of the chain corresponds to 198–214 (VLIMRKRIRLTNFKDYD). Residues 215–235 (TMFYNNVLALPLLLVFSFIME) form a helical membrane-spanning segment. The Lumenal segment spans residues 236–251 (DWSTKNLSVNLSADSL). Residues Asn-241 and Asn-245 are each glycosylated (N-linked (GlcNAc...) asparagine). The chain crosses the membrane as a helical span at residues 252–272 (AAMVISGLMSVGISYCSGWCV). Topologically, residues 273–278 (RVTSST) are cytoplasmic. The chain crosses the membrane as a helical span at residues 279–299 (TYSMVGALNKLPIALAGLVFF). Residues 300 to 303 (DAPK) are Lumenal-facing. The chain crosses the membrane as a helical span at residues 304–324 (NFLSFFSIFLGFLSGLLYAVA). Topologically, residues 325–341 (KQKKIQQQKVLAATLEK) are cytoplasmic.

The protein belongs to the TPT transporter family. SLC35D subfamily.

It localises to the golgi apparatus membrane. The protein localises to the cytoplasmic vesicle membrane. It is found in the endoplasmic reticulum membrane. Its function is as follows. Involved in the import of GDP-mannose from the cytoplasm into the Golgi lumen. This chain is Probable GDP-mannose transporter 2 (HVG1), found in Saccharomyces cerevisiae (strain Lalvin EC1118 / Prise de mousse) (Baker's yeast).